A 277-amino-acid chain; its full sequence is Adenylate kinase (277 aa).

Glycine 53–threonine 58 contributes to the ATP binding site. An NMP region spans residues alanine 73–valine 102. AMP contacts are provided by residues threonine 74, arginine 79, glycine 100–valine 102, glycine 129–arginine 132, and glutamine 136. The tract at residues glycine 170–aspartate 207 is LID. ATP is bound by residues arginine 171 and serine 180–tyrosine 181. Residues arginine 204 and arginine 215 each coordinate AMP. Glutamine 243 contributes to the ATP binding site.

This sequence belongs to the adenylate kinase family. AK2 subfamily. As to quaternary structure, monomer.

The protein resides in the cytoplasm. The protein localises to the cytosol. It localises to the mitochondrion intermembrane space. It carries out the reaction AMP + ATP = 2 ADP. In terms of biological role, catalyzes the reversible transfer of the terminal phosphate group between ATP and AMP. Plays an important role in cellular energy homeostasis and in adenine nucleotide metabolism. Adenylate kinase activity is critical for regulation of the phosphate utilization and the AMP de novo biosynthesis pathways. This Phaeosphaeria nodorum (strain SN15 / ATCC MYA-4574 / FGSC 10173) (Glume blotch fungus) protein is Adenylate kinase.